Here is a 188-residue protein sequence, read N- to C-terminus: Ion-translocating oxidoreductase complex subunit B (188 aa).

The tract at residues 1–26 (MMSLWIAIGALSTLALVSGVVLGFAA) is hydrophobic. Positions 32–91 (DEDPVVEQVDAILPQSQCGQCGYPGCRPYAEAVSTGGEKINKCAPGGEQVMLKLAELLAV) constitute a 4Fe-4S domain. Residues cysteine 49, cysteine 52, cysteine 57, cysteine 74, cysteine 117, cysteine 120, cysteine 123, cysteine 127, cysteine 147, cysteine 150, cysteine 153, and cysteine 157 each coordinate [4Fe-4S] cluster. 4Fe-4S ferredoxin-type domains lie at 108-137 (KVAFIDEANCIGCTKCIQACPVDAIIGATR) and 138-167 (AMHTVLSDLCTGCDLCVAPCPTDCIEMIPV).

This sequence belongs to the 4Fe4S bacterial-type ferredoxin family. RnfB subfamily. The complex is composed of six subunits: RnfA, RnfB, RnfC, RnfD, RnfE and RnfG. It depends on [4Fe-4S] cluster as a cofactor.

The protein resides in the cell inner membrane. Its function is as follows. Part of a membrane-bound complex that couples electron transfer with translocation of ions across the membrane. The polypeptide is Ion-translocating oxidoreductase complex subunit B (Yersinia pestis bv. Antiqua (strain Antiqua)).